An 89-amino-acid polypeptide reads, in one-letter code: Small ribosomal subunit protein uS14 (89 aa).

The protein belongs to the universal ribosomal protein uS14 family. In terms of assembly, part of the 30S ribosomal subunit. Contacts proteins S3 and S10.

Binds 16S rRNA, required for the assembly of 30S particles and may also be responsible for determining the conformation of the 16S rRNA at the A site. The chain is Small ribosomal subunit protein uS14 from Chlorobium phaeobacteroides (strain BS1).